Reading from the N-terminus, the 386-residue chain is ATP synthase subunit a (386 aa).

A run of 4 helical transmembrane segments spans residues Phe150–Val170, His243–Phe263, Phe270–Leu290, and Met310–Leu330.

It belongs to the ATPase A chain family. In terms of assembly, F-type ATPases have 2 components, CF(1) - the catalytic core - and CF(0) - the membrane proton channel. CF(1) has five subunits: alpha(3), beta(3), gamma(1), delta(1), epsilon(1). CF(0) has three main subunits: a, b and c.

It is found in the mitochondrion inner membrane. Its function is as follows. Mitochondrial membrane ATP synthase (F(1)F(0) ATP synthase or Complex V) produces ATP from ADP in the presence of a proton gradient across the membrane which is generated by electron transport complexes of the respiratory chain. F-type ATPases consist of two structural domains, F(1) - containing the extramembraneous catalytic core and F(0) - containing the membrane proton channel, linked together by a central stalk and a peripheral stalk. During catalysis, ATP synthesis in the catalytic domain of F(1) is coupled via a rotary mechanism of the central stalk subunits to proton translocation. Key component of the proton channel; it may play a direct role in the translocation of protons across the membrane. In Triticum aestivum (Wheat), this protein is ATP synthase subunit a (ATP6).